Here is a 118-residue protein sequence, read N- to C-terminus: ATP-dependent Clp protease adapter protein ClpS (118 aa).

Positions 1-24 (MNGSSNSGSPGGGQTGDDDGTGFD) are disordered.

This sequence belongs to the ClpS family. Binds to the N-terminal domain of the chaperone ClpA.

In terms of biological role, involved in the modulation of the specificity of the ClpAP-mediated ATP-dependent protein degradation. The polypeptide is ATP-dependent Clp protease adapter protein ClpS (Hyphomonas neptunium (strain ATCC 15444)).